The following is a 527-amino-acid chain: Arginine--tRNA ligase (527 aa).

The short motif at 111–121 is the 'HIGH' region element; sequence ANPTGPLHIGH.

Belongs to the class-I aminoacyl-tRNA synthetase family. As to quaternary structure, monomer.

It localises to the cytoplasm. It carries out the reaction tRNA(Arg) + L-arginine + ATP = L-arginyl-tRNA(Arg) + AMP + diphosphate. The protein is Arginine--tRNA ligase of Campylobacter concisus (strain 13826).